The chain runs to 227 residues: Gamma-glutamyl-hercynylcysteine sulfoxide hydrolase (227 aa).

Cysteine 2 functions as the Nucleophile in the catalytic mechanism. A Glutamine amidotransferase type-2 domain is found at 2-227 (CRHVAWLGAP…RDAHVVVTPL (226 aa)).

It catalyses the reaction gamma-L-glutamyl-hercynylcysteine S-oxide + H2O = S-(hercyn-2-yl)-L-cysteine S-oxide + L-glutamate. It functions in the pathway amino-acid biosynthesis; ergothioneine biosynthesis. In terms of biological role, catalyzes the hydrolysis of the gamma-glutamyl amide bond of hercynyl-gamma-L-glutamyl-L-cysteine sulfoxide to produce hercynylcysteine sulfoxide, a step in the biosynthesis pathway of ergothioneine. The polypeptide is Gamma-glutamyl-hercynylcysteine sulfoxide hydrolase (Mycolicibacterium smegmatis (strain ATCC 700084 / mc(2)155) (Mycobacterium smegmatis)).